The primary structure comprises 163 residues: Phospholipase A2 homolog 3 (163 aa).

The first 43 residues, 1–43 (MARGGSFSRLRLRAGVVVAAAAAALLLFAVVAPPAAALNIGLQ), serve as a signal peptide directing secretion. Disulfide bonds link C55-C83, C59-C89, C64-C137, C76-C96, C95-C121, and C102-C114. Ca(2+) contacts are provided by Y75, G77, and Y80. H99 is a catalytic residue. Position 100 (D100) interacts with Ca(2+).

Belongs to the phospholipase A2 family. Requires Ca(2+) as cofactor.

It localises to the secreted. It carries out the reaction a 1,2-diacyl-sn-glycero-3-phosphocholine + H2O = a 1-acyl-sn-glycero-3-phosphocholine + a fatty acid + H(+). Its activity is regulated as follows. Inhibited by EGTA. Functionally, PA2 catalyzes the calcium-dependent hydrolysis of the 2-acyl groups in 3-sn-phosphoglycerides. Releases lysophospholipids (LPLs) and free fatty acids (FFAs) from membrane phospholipids in response to hormones and other external stimuli. The sequence is that of Phospholipase A2 homolog 3 (PLA2-III) from Oryza sativa subsp. japonica (Rice).